The sequence spans 155 residues: Riboflavin kinase (155 aa).

Gly-15, Lys-21, Thr-27, and Asn-29 together coordinate ATP. Mg(2+)-binding residues include Thr-27 and Asn-29. Residue Glu-79 is the Nucleophile of the active site. ATP is bound by residues Ile-82, His-84, and Tyr-91. Positions 104, 107, and 109 each coordinate FMN.

As to quaternary structure, monomer. Directly interacts with TNFRSF1A death domain. TNFRSF1A-binding may be supported by TRADD. In the absence of TNFRSF1A, interacts with TRADD. Independently of TNFRSF1A, interacts with the NADPH oxidase subunit CYBA. Zn(2+) is required as a cofactor. Mg(2+) serves as cofactor. Detected in brain, placenta and urinary bladder.

The protein localises to the cytoplasm. The enzyme catalyses riboflavin + ATP = FMN + ADP + H(+). It participates in cofactor biosynthesis; FMN biosynthesis; FMN from riboflavin (ATP route): step 1/1. Its function is as follows. Catalyzes the phosphorylation of riboflavin (vitamin B2) to form flavin-mononucleotide (FMN), hence rate-limiting enzyme in the synthesis of FAD. Essential for TNF-induced reactive oxygen species (ROS) production. Through its interaction with both TNFRSF1A and CYBA, physically and functionally couples TNFRSF1A to NADPH oxidase. TNF-activation of RFK may enhance the incorporation of FAD in NADPH oxidase, a critical step for the assembly and activation of NADPH oxidase. The sequence is that of Riboflavin kinase (RFK) from Homo sapiens (Human).